A 126-amino-acid polypeptide reads, in one-letter code: Protein ApaG (126 aa).

The ApaG domain occupies 2–126; it reads SALDDSIRVE…FRLALPGLLH (125 aa).

This is Protein ApaG from Shewanella sp. (strain MR-4).